A 504-amino-acid polypeptide reads, in one-letter code: ATP synthase subunit alpha (504 aa).

ATP is bound at residue 169 to 176 (GDRQTGKT).

This sequence belongs to the ATPase alpha/beta chains family. F-type ATPases have 2 components, CF(1) - the catalytic core - and CF(0) - the membrane proton channel. CF(1) has five subunits: alpha(3), beta(3), gamma(1), delta(1), epsilon(1). CF(0) has three main subunits: a(1), b(2) and c(9-12). The alpha and beta chains form an alternating ring which encloses part of the gamma chain. CF(1) is attached to CF(0) by a central stalk formed by the gamma and epsilon chains, while a peripheral stalk is formed by the delta and b chains.

It localises to the cell membrane. The enzyme catalyses ATP + H2O + 4 H(+)(in) = ADP + phosphate + 5 H(+)(out). Produces ATP from ADP in the presence of a proton gradient across the membrane. The alpha chain is a regulatory subunit. The sequence is that of ATP synthase subunit alpha from Clostridium kluyveri (strain NBRC 12016).